The sequence spans 1179 residues: MYELNNFESIKIALASPEKIRQWSKGEVKKPETINYRTLKPEKEGLFCEKIFGPTKDWECHCGKYKRVRYKGVVCDRCGVEVTKSKVRRERMGHIELAAPVSHIWYFKGIPSRMGLLLDMSPRSLEKVLYFAAYIVIDPGETGLTEKQVLTEKEYSEAIEKYGSGSFKAGMGAESVKKLLENIDLEELYKDLRSKLKESTGQKRIRTIRRLEVVDAFKHSGNKPEWMILDVIPVIPPELRPMVQLDGGRFATSDLNDLYRRVINRNNRLKRLLDLGAPDIIVRNEKRMLQEAVDALIDNGRRGKPVTGPGNRPLKSLSDMLKGKQGRFRQNLLGKRVDYSGRSVIVVGPELKFYQCGLPKKMALELFKPFVMKKLVEDNHAHNIKSAKRMVEKVKPEVWDVLEEVIREHPVLLNRAPTLHRLGIQAFEPVLVEGKAIKLHPLVCTAYNADFDGDQMAVHVPLSVEAQAEARFLMLAPNNILAPKDGQPITTPTQDMILGSYYLTIEQEGVQGEGMIFKDHDEMLMAYANKAVHLHARVKVRRKLHPEDKGRLVESTVGRFIFNEEIPQNLGFVDRKKDPYALEVDFLCDKKALGKVIDKCFRKHGNTITAIMLDYIKKTGFRYSTQGAITIAVGDMEVPKEKGELISLAEEKVDKYEKAFRRGLISDEERYEKVIETWSETTEKVTEALMATLGSMNNMFIMAHSGARGSKNQIRQLGGMRGLMANATGKTVEIPIKANFREGLTVLEYFISTHGARKGLADTALRTADSGYLTRRLVDVSQDVIIREIDCGSQEGSNIKALKDGNEVIEELYDRIVGRYTLEEVIHPETGEVMIGKNEMILEDMAEEICALGIESVKIRSALKCQTRHGVCAHCYGRNLATGEAVKVGEAVGIIAAQSIGEPGTQLTMRTFHTGGVAGADITQGLPRVEELFEARKPKGLAIISELSGTVKVVETKKKREVIVTDEHGESNTYTIPYGSRMKVRDGEFVELGDEITDGSVNPHDILRIKDVAGVQNYIIKEVQRVYRLQGVDINDKHIEVIVRQMLNKVKIEEAGDTNLLPGSLETIFKYEEENARTIAAGGEPADGKPVLLGITKASLATESFLSAASFQETTRVLTEAAIKGKEDHLIGLKENVIIGKLIPAGTGLKRYKNIALNTEEVAQEEIEDTIEEIVEENL.

Zn(2+)-binding residues include cysteine 60, cysteine 62, cysteine 75, and cysteine 78. Mg(2+)-binding residues include aspartate 450, aspartate 452, and aspartate 454. Positions 791, 865, 872, and 875 each coordinate Zn(2+).

The protein belongs to the RNA polymerase beta' chain family. The RNAP catalytic core consists of 2 alpha, 1 beta, 1 beta' and 1 omega subunit. When a sigma factor is associated with the core the holoenzyme is formed, which can initiate transcription. The cofactor is Mg(2+). It depends on Zn(2+) as a cofactor.

It carries out the reaction RNA(n) + a ribonucleoside 5'-triphosphate = RNA(n+1) + diphosphate. In terms of biological role, DNA-dependent RNA polymerase catalyzes the transcription of DNA into RNA using the four ribonucleoside triphosphates as substrates. This chain is DNA-directed RNA polymerase subunit beta', found in Alkaliphilus oremlandii (strain OhILAs) (Clostridium oremlandii (strain OhILAs)).